The primary structure comprises 490 residues: Cytochrome P450 90D2 (490 aa).

Residues 4–24 (AAAGWAAPAFAVAAVVIWVVL) form a helical membrane-spanning segment. Position 437 (C437) interacts with heme.

This sequence belongs to the cytochrome P450 family. The cofactor is heme. In terms of tissue distribution, expressed at low levels leaf blades, shoot apex and elongating stem.

The protein resides in the membrane. It carries out the reaction 6-deoxoteasterone + reduced [NADPH--hemoprotein reductase] + O2 = 3-dehydro-6-deoxoteasterone + oxidized [NADPH--hemoprotein reductase] + 2 H2O + H(+). The protein operates within plant hormone biosynthesis; brassinosteroid biosynthesis. Catalyzes the C6-oxidation step in brassinosteroids biosynthesis. May convert 6-deoxoteasterone (6-deoxoTE) to 3-dehydro-6-deoxoteasterone (6-deoxo3DT, 6-deoxo3DHT), and teasterone (TE) to 3-dehydroteasterone (3DT, 3-DHT). Involved in the elongation of leaf sheaths and stems. The chain is Cytochrome P450 90D2 from Oryza sativa subsp. japonica (Rice).